The sequence spans 382 residues: C-type lectin domain-containing protein 38 (382 aa).

Residues 1–40 lie on the Cytoplasmic side of the membrane; it reads MAIFYDDPLERLNQPIKTKSYRKKQVVQRVHVFIFDNWKL. The chain crosses the membrane as a helical span at residues 41–61; the sequence is ILLGILNLIFLIIAIVFAILF. At 62–382 the chain is on the extracellular side; it reads FVGSADCAQL…FFLCKRAIDF (321 aa). A disordered region spans residues 97-116; the sequence is NAITTTQGTPSNKTSTTTPS. The segment covering 100–116 has biased composition (low complexity); that stretch reads TTTQGTPSNKTSTTTPS. 2 N-linked (GlcNAc...) asparagine glycosylation sites follow: N108 and N189. C-type lectin domains lie at 129 to 250 and 264 to 377; these read VGTK…FVCE and YNKN…FLCK. 4 disulfide bridges follow: C150-C249, C223-C241, C285-C376, and C348-C368.

In terms of tissue distribution, expressed in ventral cord motor neurons and PLM touch neurons.

It is found in the membrane. Its function is as follows. Involved in negative modulation of unc-40-mediated axon outgrowth. Required for proper presynaptic development in axons that have reached their targets. May function in concert with E3 ubiquitin-protein ligase rpm-1 in regulating axon outgrowth. This Caenorhabditis elegans protein is C-type lectin domain-containing protein 38.